A 110-amino-acid chain; its full sequence is uncharacterized protein (110 aa).

The protein to M.jannaschii MJ1213 and A.aeolicus AA15.

This is an uncharacterized protein from Methanocaldococcus jannaschii (strain ATCC 43067 / DSM 2661 / JAL-1 / JCM 10045 / NBRC 100440) (Methanococcus jannaschii).